Reading from the N-terminus, the 145-residue chain is Bacilliredoxin MW1318 (145 aa).

It belongs to the bacilliredoxin family.

In Staphylococcus aureus (strain MW2), this protein is Bacilliredoxin MW1318.